The following is a 119-amino-acid chain: Large ribosomal subunit protein bL20 (119 aa).

This sequence belongs to the bacterial ribosomal protein bL20 family.

Functionally, binds directly to 23S ribosomal RNA and is necessary for the in vitro assembly process of the 50S ribosomal subunit. It is not involved in the protein synthesizing functions of that subunit. This Clostridium beijerinckii (strain ATCC 51743 / NCIMB 8052) (Clostridium acetobutylicum) protein is Large ribosomal subunit protein bL20.